We begin with the raw amino-acid sequence, 135 residues long: uncharacterized protein (135 aa).

This is an uncharacterized protein from Archaeoglobus fulgidus (strain ATCC 49558 / DSM 4304 / JCM 9628 / NBRC 100126 / VC-16).